The sequence spans 692 residues: Elongation factor G (692 aa).

Positions 8–282 constitute a tr-type G domain; that stretch reads ENTRNIGIMA…AVIDYLPSPL (275 aa). GTP is bound by residues 17–24, 81–85, and 135–138; these read AHIDAGKT, DTPGH, and NKMD.

The protein belongs to the TRAFAC class translation factor GTPase superfamily. Classic translation factor GTPase family. EF-G/EF-2 subfamily.

The protein resides in the cytoplasm. In terms of biological role, catalyzes the GTP-dependent ribosomal translocation step during translation elongation. During this step, the ribosome changes from the pre-translocational (PRE) to the post-translocational (POST) state as the newly formed A-site-bound peptidyl-tRNA and P-site-bound deacylated tRNA move to the P and E sites, respectively. Catalyzes the coordinated movement of the two tRNA molecules, the mRNA and conformational changes in the ribosome. In Bacillus anthracis (strain CDC 684 / NRRL 3495), this protein is Elongation factor G.